The chain runs to 896 residues: Histone-lysine N-methyltransferase CLF (896 aa).

Disordered stretches follow at residues 344-419 (DNLK…NRRI) and 459-514 (SGIK…DGCD). Positions 358-390 (GSSGQKTKSQQSESSSTARVSSESSESEVQLLS) are enriched in low complexity. 3 stretches are compositionally biased toward polar residues: residues 391 to 400 (NKSPQHSPGL), 465 to 476 (VVSSQCNSPSTR), and 485 to 498 (QMEN…AQSD). The segment covering 504–514 (NNEHSATDGCD) has biased composition (basic and acidic residues). A CXC domain is found at 633–732 (RKRITERKDQ…TLGVPNQRGD (100 aa)). The region spanning 747-862 (QRVLLGRSDV…AGEELFYDYR (116 aa)) is the SET domain. An S-adenosyl-L-methionine-binding site is contributed by tyrosine 861. Residues 869-884 (PAWARKPEGPGAKDDA) show a composition bias toward basic and acidic residues. Positions 869-896 (PAWARKPEGPGAKDDAQPSTGRAKKLAH) are disordered.

Belongs to the class V-like SAM-binding methyltransferase superfamily. Histone-lysine methyltransferase family. EZ subfamily. Interacts with FIE1. Component of the polycomb repressive complex 2 (PRC2), composed of the core PRC2 components FIE2, EMF2B and EZ1. PRC2 methylates 'Lys-27' residues of histone H3 (H3K27me3), leading to transcriptional repression of the affected target gene. Widely expressed. Highly expressed in young panicle.

The catalysed reaction is L-lysyl(27)-[histone H3] + 3 S-adenosyl-L-methionine = N(6),N(6),N(6)-trimethyl-L-lysyl(27)-[histone H3] + 3 S-adenosyl-L-homocysteine + 3 H(+). In terms of biological role, polycomb group (PcG) protein. Catalytic subunit of some PcG multiprotein complex, which methylates 'Lys-27' of histone H3, leading to transcriptional repression of the affected target genes. PcG proteins act by forming multiprotein complexes, which are required to maintain the transcriptionally repressive state of homeotic genes throughout development. PcG proteins are not required to initiate repression, but to maintain it during later stages of development. Involved in the regulation of flowering. Represses flowering under long day (LD) conditions. Regulates the trimethylation on histone H3 'Lys-27' (H3K27me3) of the flowering regulators MADS14, MADS15, RFT1, EHD1, HD3A and LF. The protein is Histone-lysine N-methyltransferase CLF of Oryza sativa subsp. japonica (Rice).